The chain runs to 641 residues: Leucine-rich repeat receptor-like serine/threonine/tyrosine-protein kinase SOBIR1 (641 aa).

An N-terminal signal peptide occupies residues 1–31 (MAVPTGSANLFLRPLILAVLSFLLLSSFVSS). The Extracellular portion of the chain corresponds to 32-284 (VEWLDIDSSD…KKKKSKKKKV (253 aa)). LRR repeat units follow at residues 112-133 (ELKE…DILS), 136-159 (QLEV…SSLS), 160-182 (RLRI…KNLR), 183-205 (NLEN…IVSF), and 207-228 (NLRF…VMSS). Asn154 is a glycosylation site (N-linked (GlcNAc...) asparagine). The N-linked (GlcNAc...) asparagine glycan is linked to Asn186. A disordered region spans residues 243–278 (AETPTSSPTNKPNNSTTSKAPKGAPKPGKLKKKKKK). Over residues 245-259 (TPTSSPTNKPNNSTT) the composition is skewed to polar residues. The N-linked (GlcNAc...) asparagine glycan is linked to Asn256. Over residues 260–269 (SKAPKGAPKP) the composition is skewed to low complexity. Residues 285–305 (AAWILGFVVGAIGGTISGFVF) form a helical membrane-spanning segment. The Cytoplasmic portion of the chain corresponds to 306 to 641 (SVLFKLIIQA…VRTMLSQIKH (336 aa)). The Protein kinase domain occupies 347 to 641 (LASLEIIGRG…VRTMLSQIKH (295 aa)). Residues 353-361 (IGRGGCGEV) and Lys377 contribute to the ATP site. Asp489 serves as the catalytic Proton acceptor.

This sequence belongs to the protein kinase superfamily. Ser/Thr protein kinase family. In terms of assembly, interacts with CST. Interacts with RLP23. Component of a trimeric complex composed of RLP23, SOBIR1 and BAK1. BAK1 is recruited into a pre-formed RLP23-SOBIR1 complex in a ligand-dependent manner. Autophosphorylated on Ser, Thr and Tyr residues. As to expression, mostly present in leaves and flowers, with increasing expression in older flowers.

It is found in the cell membrane. The catalysed reaction is L-seryl-[protein] + ATP = O-phospho-L-seryl-[protein] + ADP + H(+). It catalyses the reaction L-threonyl-[protein] + ATP = O-phospho-L-threonyl-[protein] + ADP + H(+). It carries out the reaction L-tyrosyl-[protein] + ATP = O-phospho-L-tyrosyl-[protein] + ADP + H(+). In terms of biological role, dual specificity kinase acting on both serine/threonine- and tyrosine-containing substrates. Acting as a counterplayer of BIR1, promotes the activation of plant defense and cell death. Component of the RLP23-SOBIR1-BAK1 complex that mediates NLP-triggered immunity. Functions as an inhibitor/regulator of abscission, probably by regulating membrane trafficking during abscission. In Arabidopsis thaliana (Mouse-ear cress), this protein is Leucine-rich repeat receptor-like serine/threonine/tyrosine-protein kinase SOBIR1 (SOBIR1).